The primary structure comprises 841 residues: GRIP1-associated protein 1 (841 aa).

Ala-2 bears the N-acetylalanine mark. Coiled coils occupy residues 4-161 and 208-641; these read ALSE…YGKE and EQLQ…NSKS. 2 disordered regions span residues 532 to 551 and 558 to 580; these read AEES…KQCR and LKGK…EERD. Phosphoserine occurs at positions 655, 666, 668, 669, 688, 690, 691, and 692. Residues 681 to 706 form a disordered region; sequence SSAVPARSLSSSPQAQPPRPAELSDE. Residues 682–694 are compositionally biased toward low complexity; the sequence is SAVPARSLSSSPQ. Coiled-coil stretches lie at residues 701 to 735 and 785 to 814; these read AELS…LEVS and DENL…KDME.

As to quaternary structure, interacts with GRIP1, GRIP2 and AMPA receptors. Interacts (via C-terminus) with MAPK8/JNK1 and MAP3K1/MEKK1; the interaction promotes MAP3K1-mediated phosphorylation of MAPK8. Interacts (via N-terminus) with RAB4A (in GTP-bound form). Interacts (via C-terminus) with STX12. In terms of processing, proteolytically cleaved by caspase-3. A minor C-terminal proteolytic fragment of 30 kDa is produced. Proteolytic cleavage is required for JNK signaling activation.

The protein resides in the early endosome membrane. It is found in the recycling endosome membrane. It localises to the cell projection. The protein localises to the axon. Its subcellular location is the dendrite. The protein resides in the synapse. Regulates the endosomal recycling back to the neuronal plasma membrane, possibly by connecting early and late recycling endosomal domains and promoting segregation of recycling endosomes from early endosomal membranes. Involved in the localization of recycling endosomes to dendritic spines, thereby playing a role in the maintenance of dendritic spine morphology. Required for the activity-induced AMPA receptor recycling to dendrite membranes and for long-term potentiation and synaptic plasticity. Its function is as follows. Functions as a scaffold protein to facilitate MAP3K1/MEKK1-mediated activation of the JNK1 kinase by phosphorylation, possibly by bringing MAP3K1/MEKK1 and JNK1 in close proximity. The protein is GRIP1-associated protein 1 of Homo sapiens (Human).